The chain runs to 317 residues: Acetyl-coenzyme A carboxylase carboxyl transferase subunit alpha (317 aa).

The CoA carboxyltransferase C-terminal domain maps to 31 to 292 (RFEPELAQLE…DKALWATLTS (262 aa)).

This sequence belongs to the AccA family. As to quaternary structure, acetyl-CoA carboxylase is a heterohexamer composed of biotin carboxyl carrier protein (AccB), biotin carboxylase (AccC) and two subunits each of ACCase subunit alpha (AccA) and ACCase subunit beta (AccD).

Its subcellular location is the cytoplasm. The catalysed reaction is N(6)-carboxybiotinyl-L-lysyl-[protein] + acetyl-CoA = N(6)-biotinyl-L-lysyl-[protein] + malonyl-CoA. It participates in lipid metabolism; malonyl-CoA biosynthesis; malonyl-CoA from acetyl-CoA: step 1/1. Component of the acetyl coenzyme A carboxylase (ACC) complex. First, biotin carboxylase catalyzes the carboxylation of biotin on its carrier protein (BCCP) and then the CO(2) group is transferred by the carboxyltransferase to acetyl-CoA to form malonyl-CoA. This is Acetyl-coenzyme A carboxylase carboxyl transferase subunit alpha from Sorangium cellulosum (strain So ce56) (Polyangium cellulosum (strain So ce56)).